Reading from the N-terminus, the 232-residue chain is ATP synthase subunit a (232 aa).

The next 6 helical transmembrane spans lie at 18–38 (LLFI…IAFI), 74–94 (WAGL…LGLF), 107–127 (TYSL…YLAF), 142–162 (ALIP…PIAL), 173–193 (GHLL…SLMV), and 195–215 (SIPI…VACI).

Belongs to the ATPase A chain family. F-type ATPases have 2 components, CF(1) - the catalytic core - and CF(0) - the membrane proton channel. CF(1) has five subunits: alpha(3), beta(3), gamma(1), delta(1), epsilon(1). CF(0) has three main subunits: a, b and c.

It is found in the mitochondrion inner membrane. Functionally, mitochondrial membrane ATP synthase (F(1)F(0) ATP synthase or Complex V) produces ATP from ADP in the presence of a proton gradient across the membrane which is generated by electron transport complexes of the respiratory chain. F-type ATPases consist of two structural domains, F(1) - containing the extramembraneous catalytic core and F(0) - containing the membrane proton channel, linked together by a central stalk and a peripheral stalk. During catalysis, ATP synthesis in the catalytic domain of F(1) is coupled via a rotary mechanism of the central stalk subunits to proton translocation. Key component of the proton channel; it may play a direct role in the translocation of protons across the membrane. This chain is ATP synthase subunit a (ATP6), found in Paracentrotus lividus (Common sea urchin).